An 88-amino-acid polypeptide reads, in one-letter code: UPF0250 protein Shal_3239 (88 aa).

The protein belongs to the UPF0250 family.

In Shewanella halifaxensis (strain HAW-EB4), this protein is UPF0250 protein Shal_3239.